The following is a 248-amino-acid chain: MRKKLVAGNWKMHGSLAENAALLAALKPALQGIEAAVCVPFPYLAQVQTALAGSSLAWGAQNVSEHGKGAFTGEVSASMLLDFGCKYVIVGHSERRSLYGESDALVAAKYMAAQAAGLTPILCVGESLAERESGVTEQVVARQLDAVVAAAGIASLARAVVAYEPVWAIGTGKTASPEQAQAVHAFIRGKLADLDAAVAAGLIIQYGGSVKAANAAELMAQPDIDGGLIGGASLLADEFVAICRAAAK.

Position 9 to 11 (9 to 11 (NWK)) interacts with substrate. The active-site Electrophile is His92. The Proton acceptor role is filled by Glu164. Substrate contacts are provided by residues Gly170, Ser209, and 230-231 (GG).

It belongs to the triosephosphate isomerase family. In terms of assembly, homodimer.

Its subcellular location is the cytoplasm. It catalyses the reaction D-glyceraldehyde 3-phosphate = dihydroxyacetone phosphate. It functions in the pathway carbohydrate biosynthesis; gluconeogenesis. Its pathway is carbohydrate degradation; glycolysis; D-glyceraldehyde 3-phosphate from glycerone phosphate: step 1/1. Functionally, involved in the gluconeogenesis. Catalyzes stereospecifically the conversion of dihydroxyacetone phosphate (DHAP) to D-glyceraldehyde-3-phosphate (G3P). The protein is Triosephosphate isomerase of Thiobacillus denitrificans (strain ATCC 25259 / T1).